Here is a 104-residue protein sequence, read N- to C-terminus: Replication restart protein PriB (104 aa).

The region spanning 1–101 (MTNRLALSGT…LHAEQIELID (101 aa)) is the SSB domain.

The protein belongs to the PriB family. Homodimer. Interacts with PriA and DnaT. Component of the replication restart primosome. Primosome assembly occurs via a 'hand-off' mechanism. PriA binds to replication forks, subsequently PriB then DnaT bind; DnaT then displaces ssDNA to generate the helicase loading substrate.

Functionally, involved in the restart of stalled replication forks, which reloads the replicative helicase on sites other than the origin of replication; the PriA-PriB pathway is the major replication restart pathway. During primosome assembly it facilitates complex formation between PriA and DnaT on DNA; stabilizes PriA on DNA. Stimulates the DNA unwinding activity of PriA helicase. This is Replication restart protein PriB from Citrobacter koseri (strain ATCC BAA-895 / CDC 4225-83 / SGSC4696).